A 734-amino-acid polypeptide reads, in one-letter code: Photosystem I P700 chlorophyll a apoprotein A2 (734 aa).

A run of 8 helical transmembrane segments spans residues 46–69 (IFASHFGQLAIIFLWTSGNLFHVA), 135–158 (LYTGALFLLFLSAISLIAGWLHLQ), 175–199 (LNHHLSGLFGVSSLAWTGHLVHVAI), 273–291 (IAHHHLAIAFIFLVAGHMY), 330–353 (IHFQLGLALASLGVITSLVAQHMY), 369–395 (AALYTHHQYIAGFIMTGAFAHGAIFFI), 417–439 (AIISHLSWASLFLGFHTLGLYVH), and 517–535 (FLVHHAIALGLHTTTLILV). [4Fe-4S] cluster contacts are provided by Cys559 and Cys568. 2 consecutive transmembrane segments (helical) span residues 575 to 596 (AFYLAVFWMLNTIGWVTFYWHW) and 643 to 665 (LSVWAWMFLFGHLVWATGFMFLI). Chlorophyll a contacts are provided by His654, Met662, and Tyr670. Trp671 is a binding site for phylloquinone. The chain crosses the membrane as a helical span at residues 707–727 (LVGLAHFSVGYIFTYAAFLIA).

Belongs to the PsaA/PsaB family. As to quaternary structure, the PsaA/B heterodimer binds the P700 chlorophyll special pair and subsequent electron acceptors. PSI consists of a core antenna complex that captures photons, and an electron transfer chain that converts photonic excitation into a charge separation. The eukaryotic PSI reaction center is composed of at least 11 subunits. P700 is a chlorophyll a/chlorophyll a' dimer, A0 is one or more chlorophyll a, A1 is one or both phylloquinones and FX is a shared 4Fe-4S iron-sulfur center. is required as a cofactor.

It localises to the plastid. Its subcellular location is the chloroplast thylakoid membrane. It catalyses the reaction reduced [plastocyanin] + hnu + oxidized [2Fe-2S]-[ferredoxin] = oxidized [plastocyanin] + reduced [2Fe-2S]-[ferredoxin]. PsaA and PsaB bind P700, the primary electron donor of photosystem I (PSI), as well as the electron acceptors A0, A1 and FX. PSI is a plastocyanin-ferredoxin oxidoreductase, converting photonic excitation into a charge separation, which transfers an electron from the donor P700 chlorophyll pair to the spectroscopically characterized acceptors A0, A1, FX, FA and FB in turn. Oxidized P700 is reduced on the lumenal side of the thylakoid membrane by plastocyanin. This Vitis vinifera (Grape) protein is Photosystem I P700 chlorophyll a apoprotein A2.